A 300-amino-acid polypeptide reads, in one-letter code: Pantothenate synthetase (300 aa).

30–37 (MGYLHEGH) is a binding site for ATP. His-37 serves as the catalytic Proton donor. A (R)-pantoate-binding site is contributed by Gln-61. Gln-61 contacts beta-alanine. 147-150 (GMKD) lines the ATP pocket. Gln-153 lines the (R)-pantoate pocket. ATP contacts are provided by residues Val-176 and 184-187 (KSSR).

This sequence belongs to the pantothenate synthetase family. As to quaternary structure, homodimer.

The protein resides in the cytoplasm. The catalysed reaction is (R)-pantoate + beta-alanine + ATP = (R)-pantothenate + AMP + diphosphate + H(+). Its pathway is cofactor biosynthesis; (R)-pantothenate biosynthesis; (R)-pantothenate from (R)-pantoate and beta-alanine: step 1/1. Functionally, catalyzes the condensation of pantoate with beta-alanine in an ATP-dependent reaction via a pantoyl-adenylate intermediate. The protein is Pantothenate synthetase of Geobacillus kaustophilus (strain HTA426).